A 117-amino-acid polypeptide reads, in one-letter code: Acidic phospholipase A2 PA-1G (117 aa).

7 cysteine pairs are disulfide-bonded: Cys11–Cys71, Cys27–Cys117, Cys29–Cys45, Cys44–Cys98, Cys51–Cys91, Cys60–Cys84, and Cys78–Cys89. 3 residues coordinate Ca(2+): Tyr28, Gly30, and Gly32. Residue His48 is part of the active site. Asp49 contributes to the Ca(2+) binding site. The active site involves Asp92.

It belongs to the phospholipase A2 family. Group I subfamily. D49 sub-subfamily. Ca(2+) serves as cofactor. In terms of tissue distribution, expressed by the venom gland.

Its subcellular location is the secreted. The enzyme catalyses a 1,2-diacyl-sn-glycero-3-phosphocholine + H2O = a 1-acyl-sn-glycero-3-phosphocholine + a fatty acid + H(+). PLA2 catalyzes the calcium-dependent hydrolysis of the 2-acyl groups in 3-sn-phosphoglycerides. This chain is Acidic phospholipase A2 PA-1G, found in Pseudechis australis (Mulga snake).